The following is a 419-amino-acid chain: MSICSTVGAGLNLHSPANATNSTRLSSNFVHQIPVSSFSFSFQSSSLRLSQTPKFSRQRRNPIVVSSTPVVESTKSSFRAKNPKDTNILVVGSTGYIGNFVVKELVSRGFNVIAIAREKSGIKGRNSKEQASDQLKGANVCFSDVSHLDVLEKSLGDLDVPIDVVVSCLASRTGGIKDSWKIDYEATKNSLVAGRNRGASHFVLLSAICVQKPLLEFQRAKLKFEAELMEAAKEDSGFTYSIVRPTAFFKSLGGQVELVKDGKPYVMFGDGKLCACKPISEQDLASFIADCVLSEDKINQVLPIGGPGKALTPLEQGEILFRLLGKEPNFFKVPIGIMDFAIGVLDFLVKFFPAMEDAAEYGKIGRYYAAESMLILDPETGEYSADKTPSYGKDTLEDFFERVLSEGMAGQELGEQSVF.

The N-terminal 71 residues, 1–71 (MSICSTVGAG…PIVVSSTPVV (71 aa)), are a transit peptide targeting the chloroplast.

Its subcellular location is the plastid. The protein resides in the chloroplast. It carries out the reaction protochlorophyllide a + NADP(+) = 3,8-divinyl protochlorophyllide a + NADPH + H(+). Its pathway is porphyrin-containing compound metabolism; chlorophyll biosynthesis. In terms of biological role, catalyzes the conversion of divinyl chlorophyllide to monovinyl chlorophyllide. Reduces the 8-vinyl group of the tetrapyrrole to an ethyl group using NADPH as the reductant. The best substrate is (3,8-divinyl)-chlorophyllide a (DV-Chlidea). Very low activity with (3,8-divinyl)-protochlorophyllide a (DV-Pchlidea) and (3,8-divinyl)-magnesium-protoporphyrin IX monomethyl ester (DV-MPE). No activity with (3,8-divinyl)-magnesium-protoporphyrin IX (DV-Mg-Proto) and (3,8-divinyl)-chlorophyll a (DV-Chla). The protein is Divinyl chlorophyllide a 8-vinyl-reductase, chloroplastic (DVR) of Cucumis sativus (Cucumber).